Consider the following 473-residue polypeptide: Chaperone SurA (473 aa).

The signal sequence occupies residues 1–36 (MTNDRLFAGIARVLSVRPLAAALALLLTLPLIGVQA). PpiC domains lie at 214-315 (SLAL…KVIE) and 326-425 (ITQT…QVLE).

It localises to the periplasm. It carries out the reaction [protein]-peptidylproline (omega=180) = [protein]-peptidylproline (omega=0). Chaperone involved in the correct folding and assembly of outer membrane proteins. Recognizes specific patterns of aromatic residues and the orientation of their side chains, which are found more frequently in integral outer membrane proteins. May act in both early periplasmic and late outer membrane-associated steps of protein maturation. The sequence is that of Chaperone SurA from Polaromonas sp. (strain JS666 / ATCC BAA-500).